The sequence spans 338 residues: Glycerol-1-phosphate dehydrogenase [NAD(P)+] (338 aa).

NAD(+) is bound by residues 81 to 85 and 103 to 106; these read GRPLD and TSAS. D108 serves as a coordination point for substrate. NAD(+) is bound at residue S112. D157 serves as a coordination point for substrate. Positions 157 and 238 each coordinate Zn(2+). H242 is a substrate binding site. H256 contacts Zn(2+).

Belongs to the glycerol-1-phosphate dehydrogenase family. Homodimer. It depends on Zn(2+) as a cofactor.

The protein resides in the cytoplasm. The catalysed reaction is sn-glycerol 1-phosphate + NAD(+) = dihydroxyacetone phosphate + NADH + H(+). It catalyses the reaction sn-glycerol 1-phosphate + NADP(+) = dihydroxyacetone phosphate + NADPH + H(+). The protein operates within membrane lipid metabolism; glycerophospholipid metabolism. In terms of biological role, catalyzes the NAD(P)H-dependent reduction of dihydroxyacetonephosphate (DHAP or glycerone phosphate) to glycerol 1-phosphate (G1P). The G1P thus generated is used as the glycerophosphate backbone of phospholipids in the cellular membranes of Archaea. The protein is Glycerol-1-phosphate dehydrogenase [NAD(P)+] of Pyrobaculum calidifontis (strain DSM 21063 / JCM 11548 / VA1).